The primary structure comprises 356 residues: S-adenosylmethionine:tRNA ribosyltransferase-isomerase (356 aa).

This sequence belongs to the QueA family. In terms of assembly, monomer.

It localises to the cytoplasm. The catalysed reaction is 7-aminomethyl-7-carbaguanosine(34) in tRNA + S-adenosyl-L-methionine = epoxyqueuosine(34) in tRNA + adenine + L-methionine + 2 H(+). It participates in tRNA modification; tRNA-queuosine biosynthesis. Its function is as follows. Transfers and isomerizes the ribose moiety from AdoMet to the 7-aminomethyl group of 7-deazaguanine (preQ1-tRNA) to give epoxyqueuosine (oQ-tRNA). This chain is S-adenosylmethionine:tRNA ribosyltransferase-isomerase, found in Enterobacter sp. (strain 638).